A 580-amino-acid chain; its full sequence is Arginine--tRNA ligase (580 aa).

Residues 131–141 (ANPTGPMHVGH) carry the 'HIGH' region motif.

It belongs to the class-I aminoacyl-tRNA synthetase family. In terms of assembly, monomer.

Its subcellular location is the cytoplasm. The catalysed reaction is tRNA(Arg) + L-arginine + ATP = L-arginyl-tRNA(Arg) + AMP + diphosphate. This chain is Arginine--tRNA ligase, found in Cereibacter sphaeroides (strain ATCC 17029 / ATH 2.4.9) (Rhodobacter sphaeroides).